The following is a 347-amino-acid chain: Quinolinate synthase (347 aa).

Iminosuccinate contacts are provided by His47 and Ser68. A [4Fe-4S] cluster-binding site is contributed by Cys113. Residues 139-141 and Ser156 contribute to the iminosuccinate site; that span reads YAN. Cys200 is a binding site for [4Fe-4S] cluster. Residues 226–228 and Thr243 each bind iminosuccinate; that span reads HPE. Cys297 contributes to the [4Fe-4S] cluster binding site.

Belongs to the quinolinate synthase family. Type 1 subfamily. [4Fe-4S] cluster is required as a cofactor.

Its subcellular location is the cytoplasm. It carries out the reaction iminosuccinate + dihydroxyacetone phosphate = quinolinate + phosphate + 2 H2O + H(+). Its pathway is cofactor biosynthesis; NAD(+) biosynthesis; quinolinate from iminoaspartate: step 1/1. Functionally, catalyzes the condensation of iminoaspartate with dihydroxyacetone phosphate to form quinolinate. The polypeptide is Quinolinate synthase (Shigella boydii serotype 18 (strain CDC 3083-94 / BS512)).